The sequence spans 144 residues: Large ribosomal subunit protein uL15 (144 aa).

Residues 1–59 form a disordered region; that stretch reads MELNNLKPAEGAKHAKRRVGRGIGSGLGKTAGRGHKGQKSRSGGFHKVGFEGGQMPLQR. Over residues 21–31 the composition is skewed to gly residues; sequence RGIGSGLGKTA.

It belongs to the universal ribosomal protein uL15 family. As to quaternary structure, part of the 50S ribosomal subunit.

Functionally, binds to the 23S rRNA. The chain is Large ribosomal subunit protein uL15 from Burkholderia thailandensis (strain ATCC 700388 / DSM 13276 / CCUG 48851 / CIP 106301 / E264).